A 1097-amino-acid chain; its full sequence is U3 small nucleolar RNA-associated protein 22 (1097 aa).

Composition is skewed to basic and acidic residues over residues 1–10 (MNGLKREHES) and 18–27 (KTPETEYDSH). The interval 1 to 27 (MNGLKREHESSSSQDGSKTPETEYDSH) is disordered.

This sequence belongs to the NRAP family. In terms of assembly, component of the ribosomal small subunit (SSU) processome.

The protein resides in the nucleus. It is found in the nucleolus. Functionally, involved in nucleolar processing of pre-18S ribosomal RNA and ribosome assembly. The chain is U3 small nucleolar RNA-associated protein 22 from Schizosaccharomyces pombe (strain 972 / ATCC 24843) (Fission yeast).